A 141-amino-acid chain; its full sequence is Nucleoside diphosphate kinase (141 aa).

ATP is bound by residues lysine 11, phenylalanine 59, arginine 87, threonine 93, arginine 104, and asparagine 114. Residue histidine 117 is the Pros-phosphohistidine intermediate of the active site.

It belongs to the NDK family. Homotetramer. Mg(2+) is required as a cofactor.

The protein resides in the cytoplasm. The enzyme catalyses a 2'-deoxyribonucleoside 5'-diphosphate + ATP = a 2'-deoxyribonucleoside 5'-triphosphate + ADP. The catalysed reaction is a ribonucleoside 5'-diphosphate + ATP = a ribonucleoside 5'-triphosphate + ADP. Major role in the synthesis of nucleoside triphosphates other than ATP. The ATP gamma phosphate is transferred to the NDP beta phosphate via a ping-pong mechanism, using a phosphorylated active-site intermediate. The protein is Nucleoside diphosphate kinase of Acidovorax sp. (strain JS42).